Reading from the N-terminus, the 257-residue chain is Baramicin A1 (257 aa).

A signal peptide spans 1-19; the sequence is MKSFGLIALAICGVICVAA. Positions 20–21 are excised as a propeptide; sequence EP. Gln22 is subject to Pyrrolidone carboxylic acid. The interval 95–122 is disordered; that stretch reads GPNFSAKNLGPNGAKSVGIPQRARRSPQ. An N-linked (GlcNAc...) asparagine glycan is attached at Asn97. The propeptide occupies 118–121; it reads RRSP. Residue Gln122 is modified to Pyrrolidone carboxylic acid. Positions 145–148 are excised as a propeptide; sequence RRSP. Gln149 carries the post-translational modification Pyrrolidone carboxylic acid. A propeptide spanning residues 172-175 is cleaved from the precursor; the sequence is RRSP. Gln176 is modified (pyrrolidone carboxylic acid). The propeptide occupies 199-204; it reads RRGIND. N-linked (GlcNAc...) asparagine glycosylation is present at Asn225.

In terms of processing, proteolytically cleaved. Hemolymph (at protein level).

The protein resides in the secreted. Functionally, secreted immune-induced peptides induced by Toll signaling. Has a significant role in resistance to infection by the entomopathogenic fungus B.bassiana R444 and weak antifungal activity against M.rileyi PHP1705. In adult males, activity appears to be important for neuromuscular processes that mediate correct wing posture upon Toll activation. The polypeptide is Baramicin A1 (Drosophila melanogaster (Fruit fly)).